Reading from the N-terminus, the 282-residue chain is NADPH-dependent 7-cyano-7-deazaguanine reductase (282 aa).

Residue 88-90 (IES) coordinates substrate. 90–91 (SK) lines the NADPH pocket. Cys190 (thioimide intermediate) is an active-site residue. Catalysis depends on Asp197, which acts as the Proton donor. 229–230 (HE) contributes to the substrate binding site. 258 to 259 (RG) is a binding site for NADPH.

It belongs to the GTP cyclohydrolase I family. QueF type 2 subfamily. Homodimer.

It localises to the cytoplasm. It carries out the reaction 7-aminomethyl-7-carbaguanine + 2 NADP(+) = 7-cyano-7-deazaguanine + 2 NADPH + 3 H(+). Its pathway is tRNA modification; tRNA-queuosine biosynthesis. In terms of biological role, catalyzes the NADPH-dependent reduction of 7-cyano-7-deazaguanine (preQ0) to 7-aminomethyl-7-deazaguanine (preQ1). In Salmonella paratyphi C (strain RKS4594), this protein is NADPH-dependent 7-cyano-7-deazaguanine reductase.